Here is a 258-residue protein sequence, read N- to C-terminus: Countin-1 (258 aa).

An N-terminal signal peptide occupies residues 1-21; the sequence is MNKLFSLILALFLVNSAVVSS. The Saposin B-type domain maps to 22–106; that stretch reads LDSCSICVDF…EKISVCKTND (85 aa). 3 cysteine pairs are disulfide-bonded: Cys-25–Cys-102, Cys-28–Cys-96, and Cys-56–Cys-69. Residues Asn-121 and Asn-215 are each glycosylated (N-linked (GlcNAc...) asparagine). The span at 233-248 shows a compositional bias: low complexity; it reads AGSFSGSSQSTQTGAA. The disordered stretch occupies residues 233–258; it reads AGSFSGSSQSTQTGAASGSGSGFALF. Residues 249 to 258 show a composition bias toward gly residues; that stretch reads SGSGSGFALF.

The protein belongs to the countin family. Component of the counting factor (CF) complex, which includes cf60, cf50, cf45-1 and ctnA.

The protein localises to the secreted. In terms of biological role, cell-counting factor that limits the maximum size of the multicellular structure. May down-regulate the expression of gp24, which mediates cell adhesion. The chain is Countin-1 (ctnA) from Dictyostelium discoideum (Social amoeba).